Consider the following 167-residue polypeptide: NAD(P)H-quinone oxidoreductase subunit I, chloroplastic (167 aa).

4Fe-4S ferredoxin-type domains are found at residues 55 to 84 (GRIHFEFDKCIACEVCVRVCPIDLPVVDWK) and 95 to 124 (LNYSIDFGICIFCGNCVEYCPTNCLSMTEE). [4Fe-4S] cluster is bound by residues Cys64, Cys67, Cys70, Cys74, Cys104, Cys107, Cys110, and Cys114.

Belongs to the complex I 23 kDa subunit family. NDH is composed of at least 16 different subunits, 5 of which are encoded in the nucleus. Requires [4Fe-4S] cluster as cofactor.

The protein resides in the plastid. The protein localises to the chloroplast thylakoid membrane. It catalyses the reaction a plastoquinone + NADH + (n+1) H(+)(in) = a plastoquinol + NAD(+) + n H(+)(out). The enzyme catalyses a plastoquinone + NADPH + (n+1) H(+)(in) = a plastoquinol + NADP(+) + n H(+)(out). Functionally, NDH shuttles electrons from NAD(P)H:plastoquinone, via FMN and iron-sulfur (Fe-S) centers, to quinones in the photosynthetic chain and possibly in a chloroplast respiratory chain. The immediate electron acceptor for the enzyme in this species is believed to be plastoquinone. Couples the redox reaction to proton translocation, and thus conserves the redox energy in a proton gradient. This Jasminum nudiflorum (Winter jasmine) protein is NAD(P)H-quinone oxidoreductase subunit I, chloroplastic.